The following is a 372-amino-acid chain: Transcription factor MYB80 (372 aa).

2 consecutive HTH myb-type domains span residues 9-65 (KDNV…RPDL) and 66-116 (KHGE…KKKL). DNA-binding regions (H-T-H motif) lie at residues 37-61 (WRLI…TNYL) and 89-112 (WSVI…NTKL). Residues 298 to 311 (MWSHQSLYSGSSGT) are compositionally biased toward polar residues. The disordered stretch occupies residues 298 to 347 (MWSHQSLYSGSSGTEEARRELPEKGNDSVGSSGGDDDAADDGKDSGKGAA). Over residues 312–323 (EEARRELPEKGN) the composition is skewed to basic and acidic residues.

Its subcellular location is the nucleus. In terms of biological role, essential for tapetum development in anthers and microsporogenesis. May regulate the timing of tapetal programmed cell death (PCD) which is critical for pollen development. The polypeptide is Transcription factor MYB80 (Oryza sativa subsp. japonica (Rice)).